The chain runs to 289 residues: MPKASHQDLRRSFRALTSSNSCFHTASVFDPMSAQIAADLGFEVGILGGSVASLQVLAAPDFALITLSEFVEQATRIGRVAQLPVIADADHGYGNALNVMRTVVELERAGISALTIEDTLLPAQFGRKSTDLISTAEGVGKIRAALEARVDPEMSIFARTNAAIIPVQEAISRVQQYQAAGADGITIVGIRDFDHLAQVSEGITVPLMLVTYGNPELHDNARLAEMGVRVCVHGHAAYFAAIKATYDCLREQRQILGSESNMSATELTHTYTQPEDYVEWAKKFMNVNE.

Residue Ser50 participates in substrate binding. Asp88 contacts Mg(2+). The substrate site is built by Arg159 and His235.

The protein belongs to the isocitrate lyase/PEP mutase superfamily. Oxaloacetate decarboxylase family. Homotetramer; dimer of dimers. Mg(2+) is required as a cofactor.

The catalysed reaction is oxaloacetate + H(+) = pyruvate + CO2. In terms of biological role, catalyzes the decarboxylation of oxaloacetate into pyruvate. Seems to play a role in maintaining cellular concentrations of bicarbonate and pyruvate. The chain is Oxaloacetate decarboxylase from Pseudomonas syringae pv. tomato (strain ATCC BAA-871 / DC3000).